We begin with the raw amino-acid sequence, 469 residues long: Uronate isomerase (469 aa).

The protein belongs to the metallo-dependent hydrolases superfamily. Uronate isomerase family.

The enzyme catalyses D-glucuronate = D-fructuronate. The catalysed reaction is aldehydo-D-galacturonate = keto-D-tagaturonate. It participates in carbohydrate metabolism; pentose and glucuronate interconversion. The sequence is that of Uronate isomerase from Edwardsiella ictaluri (strain 93-146).